A 467-amino-acid chain; its full sequence is Phytase A (467 aa).

The signal sequence occupies residues 1-23 (MGVSAVLLPLYLLAGVTSGLAVP). The N-linked (GlcNAc...) asparagine glycan is linked to N27. C31 and C40 are oxidised to a cystine. 1D-myo-inositol hexakisphosphate contacts are provided by Q50 and Y51. N59 carries N-linked (GlcNAc...) asparagine glycosylation. 4 cysteine pairs are disulfide-bonded: C71-C414, C215-C465, C264-C282, and C436-C444. 1D-myo-inositol hexakisphosphate contacts are provided by R81, H82, R85, and T88. Catalysis depends on H82, which acts as the Nucleophile. N105 and N120 each carry an N-linked (GlcNAc...) asparagine glycan. R165 contacts 1D-myo-inositol hexakisphosphate. 2 N-linked (GlcNAc...) asparagine glycosylation sites follow: N207 and N230. K301 lines the 1D-myo-inositol hexakisphosphate pocket. N339 and N352 each carry an N-linked (GlcNAc...) asparagine glycan. Residues H361 and D362 each contribute to the 1D-myo-inositol hexakisphosphate site. N-linked (GlcNAc...) asparagine glycans are attached at residues N376 and N388.

This sequence belongs to the histidine acid phosphatase family. In terms of assembly, monomer.

Its subcellular location is the secreted. The enzyme catalyses 1D-myo-inositol hexakisphosphate + H2O = 1D-myo-inositol 1,2,4,5,6-pentakisphosphate + phosphate. It catalyses the reaction 1D-myo-inositol 1,2,4,5,6-pentakisphosphate + H2O = 1D-myo-inositol 1,2,5,6-tetrakisphosphate + phosphate. The catalysed reaction is 1D-myo-inositol 1,2,5,6-tetrakisphosphate + H2O = 1D-myo-inositol 1,2,6-trisphosphate + phosphate. It carries out the reaction 1D-myo-inositol 1,2,6-trisphosphate + H2O = 1D-myo-inositol 1,2-bisphosphate + phosphate. The enzyme catalyses 1D-myo-inositol 1,2-bisphosphate + H2O = 1D-myo-inositol 2-phosphate + phosphate. In terms of biological role, catalyzes the phosphate monoester hydrolysis of phytic acid (myo-inositol hexakisphosphate), which results in the stepwise formation of myo-inositol pentakis-, tetrakis-, tris-, bis-, and monophosphates, as well as the liberation of inorganic phosphate. Myo-inositol 2-monophosphate is the end product. This Aspergillus awamori (Black koji mold) protein is Phytase A (phyA).